A 312-amino-acid chain; its full sequence is Malate dehydrogenase (312 aa).

NAD(+) contacts are provided by residues 7-13 (GAAGGIG) and Asp-34. Residues Arg-81 and Arg-87 each contribute to the substrate site. NAD(+) is bound by residues Asn-94 and 117–119 (ITN). Asn-119 and Arg-153 together coordinate substrate. The Proton acceptor role is filled by His-177. Met-227 is an NAD(+) binding site.

The protein belongs to the LDH/MDH superfamily. MDH type 1 family. Homodimer.

The enzyme catalyses (S)-malate + NAD(+) = oxaloacetate + NADH + H(+). Catalyzes the reversible oxidation of malate to oxaloacetate. The polypeptide is Malate dehydrogenase (Shigella dysenteriae serotype 1 (strain Sd197)).